A 259-amino-acid chain; its full sequence is Deoxyribose-phosphate aldolase (259 aa).

Catalysis depends on aspartate 102, which acts as the Proton donor/acceptor. The active-site Schiff-base intermediate with acetaldehyde is the lysine 167. Lysine 201 serves as the catalytic Proton donor/acceptor.

The protein belongs to the DeoC/FbaB aldolase family. DeoC type 2 subfamily.

It is found in the cytoplasm. The catalysed reaction is 2-deoxy-D-ribose 5-phosphate = D-glyceraldehyde 3-phosphate + acetaldehyde. It functions in the pathway carbohydrate degradation; 2-deoxy-D-ribose 1-phosphate degradation; D-glyceraldehyde 3-phosphate and acetaldehyde from 2-deoxy-alpha-D-ribose 1-phosphate: step 2/2. Catalyzes a reversible aldol reaction between acetaldehyde and D-glyceraldehyde 3-phosphate to generate 2-deoxy-D-ribose 5-phosphate. This Klebsiella pneumoniae (strain 342) protein is Deoxyribose-phosphate aldolase.